A 3587-amino-acid polypeptide reads, in one-letter code: Surfactin synthase subunit 1 (3587 aa).

3 consecutive Carrier domains span residues 971–1046, 2010–2085, and 3038–3112; these read APRN…DHRE, APRN…ASAE, and APTT…ERAE. 3 positions are modified to O-(pantetheine 4'-phosphoryl)serine: serine 1006, serine 2045, and serine 3073.

This sequence belongs to the ATP-dependent AMP-binding enzyme family. Pantetheine 4'-phosphate is required as a cofactor.

It functions in the pathway antibiotic biosynthesis; surfactin biosynthesis. In terms of biological role, this protein is a multifunctional enzyme able to activate and polymerize the amino acids Leu, Glu, Asp and Val. Activation sites for these AA consist of individual domains. The polypeptide is Surfactin synthase subunit 1 (srfAA) (Bacillus subtilis (strain 168)).